We begin with the raw amino-acid sequence, 160 residues long: Cytochrome b6-f complex subunit 4 (160 aa).

3 consecutive transmembrane segments (helical) span residues 36 to 56 (LLYI…GLAV), 95 to 115 (LLGV…PFLE), and 131 to 151 (TVFL…ALPI).

The protein belongs to the cytochrome b family. PetD subfamily. In terms of assembly, the 4 large subunits of the cytochrome b6-f complex are cytochrome b6, subunit IV (17 kDa polypeptide, petD), cytochrome f and the Rieske protein, while the 4 small subunits are petG, petL, petM and petN. The complex functions as a dimer.

It is found in the plastid. It localises to the chloroplast thylakoid membrane. In terms of biological role, component of the cytochrome b6-f complex, which mediates electron transfer between photosystem II (PSII) and photosystem I (PSI), cyclic electron flow around PSI, and state transitions. In Psilotum nudum (Whisk fern), this protein is Cytochrome b6-f complex subunit 4.